The following is a 150-amino-acid chain: Protein E6 (150 aa).

2 zinc fingers span residues 31–67 (CVFCKNALTTAEIYSYAYKHLKVLFRGGYPYAACACC) and 104–140 (CYLCHKPLCEVEKVKHILTKARFIKLNCTWKGRCLHC).

This sequence belongs to the papillomaviridae E6 protein family. In terms of assembly, forms homodimers. Interacts with ubiquitin-protein ligase UBE3A/E6-AP; this interaction stimulates UBE3A ubiquitin activity. Interacts with host TP53 and EP300; this interaction inhibits TP53 activity. Interacts with human zyxin.

It localises to the host cytoplasm. It is found in the host nucleus. In terms of biological role, plays a major role in the induction and maintenance of cellular transformation. E6 associates with host UBE3A/E6-AP ubiquitin-protein ligase and modulates its activity. Sequesters tumor suppressor TP53 in the host cytoplasm and modulates its activity by interacting with host EP300 that results in the reduction of TP53 acetylation and activation. In turn, apoptosis induced by DNA damage is inhibited. E6 also protects host keratinocytes from apoptosis by mediating the degradation of host BAK1. May also inhibit host immune response. The sequence is that of Protein E6 from Human papillomavirus type 6b.